We begin with the raw amino-acid sequence, 487 residues long: L-tartrate/succinate antiporter (487 aa).

Residues 1–9 (MKPSTEWWR) lie on the Periplasmic side of the membrane. A helical transmembrane segment spans residues 10 to 30 (YLAPLAVIAIIALLPVPAGLE). The Cytoplasmic portion of the chain corresponds to 31 to 32 (NH). The next 2 helical transmembrane spans lie at 33-53 (TWLY…EPVP) and 54-74 (GAVV…WLLF). Residues 75–92 (SPEQLAQPGFKFTAKSLS) lie on the Cytoplasmic side of the membrane. The helical transmembrane segment at 93-113 (WAVSGFSNSVIWLIFAAFMFG) threads the bilayer. At 114 to 136 (TGYEKTGLGRRIALILVKKMGHR) the chain is on the periplasmic side. The helical transmembrane segment at 137–157 (TLFLGYAVMFSELILAPVTPS) threads the bilayer. Residues 158-188 (NSARGAGIIYPIIRNLPPLYQSQPNDSSSRS) lie on the Cytoplasmic side of the membrane. Residues 189 to 209 (IGSYIMWMGIVADCVTSAIFL) form a helical membrane-spanning segment. Topologically, residues 210-235 (TAMAPNLLLIGLMKSASHATLSWGDW) are periplasmic. A helical membrane pass occupies residues 236–256 (FLGMLPLSILLVLLVPWLAYV). Over 257–291 (LYPPVLKSGDQVPRWAETELQAMGPLCSREKRMLG) the chain is Cytoplasmic. 2 helical membrane-spanning segments follow: residues 292–312 (LMVG…AAMV) and 313–333 (GYSV…DIVS). Residues 334–339 (NKAAWN) lie on the Cytoplasmic side of the membrane. The chain crosses the membrane as a helical span at residues 340–360 (VFFWLASLITLATGLNNTGFI). Residues 361-369 (SWFGKLLAG) are Periplasmic-facing. Residues 370 to 390 (SLSGYSPTMVMVALIVVFYLL) form a helical membrane-spanning segment. Over 391–392 (RY) the chain is Cytoplasmic. The chain crosses the membrane as a helical span at residues 393-413 (FFASATAYTSALAPMMIAAAL). Residues 414 to 417 (AMPE) are Periplasmic-facing. Residues 418–438 (IPLPVFCLMVGAAIGLGSILT) traverse the membrane as a helical segment. Topologically, residues 439–464 (PYATGPSPIYYGSGYLPTADYWRLGA) are cytoplasmic. A helical membrane pass occupies residues 465-485 (IFGLIFLVLLVITGLLWMPVV). Residues 486–487 (LL) lie on the Periplasmic side of the membrane.

The protein belongs to the SLC13A/DASS transporter (TC 2.A.47) family. DIT1 subfamily.

The protein localises to the cell inner membrane. It carries out the reaction (2R,3R)-tartrate(out) + succinate(in) = (2R,3R)-tartrate(in) + succinate(out). Functionally, catalyzes the uptake of tartrate in exchange for intracellular succinate. Essential for anaerobic L-tartrate fermentation. In Escherichia coli (strain K12), this protein is L-tartrate/succinate antiporter.